Here is a 305-residue protein sequence, read N- to C-terminus: Tyrosine recombinase XerC (305 aa).

The Core-binding (CB) domain maps to 4–95; the sequence is TSIQELIDKW…AVKNFYRFLE (92 aa). The Tyr recombinase domain occupies 116 to 298; that stretch reads LLPKALSEDD…SIKHLEAVYT (183 aa). Catalysis depends on residues R159, K182, H250, R253, and H276. Y285 functions as the O-(3'-phospho-DNA)-tyrosine intermediate in the catalytic mechanism.

It belongs to the 'phage' integrase family. XerC subfamily. As to quaternary structure, forms a cyclic heterotetrameric complex composed of two molecules of XerC and two molecules of XerD.

It is found in the cytoplasm. Its function is as follows. Site-specific tyrosine recombinase, which acts by catalyzing the cutting and rejoining of the recombining DNA molecules. The XerC-XerD complex is essential to convert dimers of the bacterial chromosome into monomers to permit their segregation at cell division. It also contributes to the segregational stability of plasmids. This chain is Tyrosine recombinase XerC, found in Rickettsia felis (strain ATCC VR-1525 / URRWXCal2) (Rickettsia azadi).